Reading from the N-terminus, the 75-residue chain is Ribonuclease pancreatic (75 aa).

2 cysteine pairs are disulfide-bonded: Cys-7–Cys-65 and Cys-46–Cys-53. Residue Asn-15 is glycosylated (N-linked (GlcNAc...) asparagine). Substrate is bound by residues 22 to 26 (KPVNT), Lys-47, and Arg-66.

This sequence belongs to the pancreatic ribonuclease family. As to quaternary structure, monomer. Interacts with and forms tight 1:1 complexes with RNH1. Dimerization of two such complexes may occur. Interaction with RNH1 inhibits this protein. In terms of tissue distribution, pancreas.

It is found in the secreted. It carries out the reaction an [RNA] containing cytidine + H2O = an [RNA]-3'-cytidine-3'-phosphate + a 5'-hydroxy-ribonucleotide-3'-[RNA].. It catalyses the reaction an [RNA] containing uridine + H2O = an [RNA]-3'-uridine-3'-phosphate + a 5'-hydroxy-ribonucleotide-3'-[RNA].. Its function is as follows. Endonuclease that catalyzes the cleavage of RNA on the 3' side of pyrimidine nucleotides. Acts on single-stranded and double-stranded RNA. In Oryx leucoryx (Arabian oryx), this protein is Ribonuclease pancreatic (rnase1).